The following is a 106-amino-acid chain: UPF0145 protein Tlet_1264 (106 aa).

This sequence belongs to the UPF0145 family.

In Pseudothermotoga lettingae (strain ATCC BAA-301 / DSM 14385 / NBRC 107922 / TMO) (Thermotoga lettingae), this protein is UPF0145 protein Tlet_1264.